Consider the following 425-residue polypeptide: Cysteate synthase (425 aa).

Lys106 carries the N6-(pyridoxal phosphate)lysine modification. Residues Asn132 and Thr382 each coordinate pyridoxal 5'-phosphate.

The protein belongs to the threonine synthase family. Cysteate synthase subfamily. Homotrimer. It depends on pyridoxal 5'-phosphate as a cofactor.

It carries out the reaction O-phospho-L-serine + sulfite + H(+) = L-cysteate + phosphate. It participates in cofactor biosynthesis; coenzyme M biosynthesis. Its function is as follows. Specifically catalyzes the beta-elimination of phosphate from L-phosphoserine and the beta-addition of sulfite to the dehydroalanine intermediate to produce L-cysteate. The polypeptide is Cysteate synthase (Methanosphaerula palustris (strain ATCC BAA-1556 / DSM 19958 / E1-9c)).